The chain runs to 313 residues: 2-oxoglutarate-dependent dioxygenase eupC (313 aa).

A Fe2OG dioxygenase domain is found at 187 to 284 (PSIPMRFLHY…LNAKALDGSG (98 aa)). Positions 212, 214, and 263 each coordinate Fe cation. K274 is a binding site for 2-oxoglutarate.

The protein belongs to the iron/ascorbate-dependent oxidoreductase family. The cofactor is Fe(2+).

It participates in secondary metabolite biosynthesis; terpenoid biosynthesis. 2-oxoglutarate-dependent dioxygenase; part of the gene cluster that mediates the biosynthesis of eupenifeldin, a bistropolone meroterpenoid that acts as an antitumor agent. The first step of eupenifeldin biosynthesis is the biosynthesis of 3-methylorcinaldehyde performed by the non-reducing polyketide synthase eupA. Oxidative dearomatization of 3-methylorcinaldehyde likely catalyzed by the FAD-dependent monooxygenase eupB is followed by oxidative ring expansion by the 2-oxoglutarate-dependent dioxygenase eupC to provide the first tropolone metabolite, tropolone stipitaldehyde. In parallel, generation of sesquiterpene alpha-humulene from farnesylpyrophosphate (FPP) is catalyzed by the terpene cyclase eupE. The cytochrome P450 monooxygenase eupD then hydroxylates humulene to humulenol. The putative Diels-Alderase eupF probably catalyzes the formation of the tropolone-humulene skeleton by linking humulenol and the polyketide moiety. The short-chain dehydrogenase/reductase eupG and the flavin-dependent monooxygenase eupH are also essential for eupenifeldin biosynthesis and are likely the additional decorating enzymes of the tropolone-humulene skeleton to produce final eupenifeldin or derivatives. This Phoma sp protein is 2-oxoglutarate-dependent dioxygenase eupC.